We begin with the raw amino-acid sequence, 350 residues long: RING finger protein 44 (350 aa).

An RING-type; atypical zinc finger spans residues cysteine 298 to arginine 339.

In Rattus norvegicus (Rat), this protein is RING finger protein 44 (Rnf44).